The chain runs to 4080 residues: MAPSQAPREPIAIVGSGCRFPGESSSPSKLWELLQAPRDVQTEIPPTRFNPHGFYHPDNLHHGTSNVRHSYLLTEDHRHFDAQFFGIKPAEAHCIDPQQRLLMETVYESLESAGLRLEDLRGSETAVYVGLMCGDYADIVLRDPESFPMYLSTGTARSIMSNRISYFFDWHGPSMTIDTACSSSLVAVHEAVQTLRLGRSRVAVAAGSNLCLSPEPYIAESKLQMLSPTGRSRMWDIQADGYARGDGVAAVVLKTLSAALADGDHIECLIRETSVNQDGRTRGITMPSSEAQTRLIQDTYARAGLDPLKPQERCQYFEAHGTGTPTGDPLEAAAIRQAFFPGDNNQDRGCLFVGSIKTVVGHTEGTAGLAGVLKASLALRNGIIPPNLLFNQLNPKIKPFYTNLEIATAAKPWPVLPAGVPRRASVNSFGFGGTNAHAIIEAYEPALTAPSKSTEPDIAFIPFVFSAASESALRRMLELYAQHLSKNPTINARDLGWTLQARRSRFPFSIAVPGATTDQLRSNLETRLNSTDARQPLKIVKQESRPENPRILGVFTGQGAQWATMGRALYQSPKVRQIIQELDASLQALPVGERPSWTLASELTADASVSRIKAAEISQPMCTAVQVVLVQLLQSAGVVFDAVVGHSSGEIAAAYAAGFLSGTDAIRIAYYRGLCARLAQGAHGEKGAMMAVGTGVEDALELCAEPEFRGRMSVAAVNSSASVTLSGDADAITQAKEILDEEKKFARVLVVDKAYHSHHMQACSGRYLSCLAKARIAVSAPTDTKCVWYSTVRQGPVTEADLADLTGPYWNDNMVSPVLFAQAVETALAARGPFNMAVEVGPHPALRGPAQQTVQDVLETSLPYTPTLQRGMNDVEAMAECLGLLWQGLAPGFVDLSSYDAFLSQGAVSRVIKDLPRYSWDHDRVFWYESRVSRATRQRIAASHPILGTRCPDGVEQEFRWRNFLSLKELPWLTGHRIQGQIIFPGAGYISAAVDSARAMSSNESIQLVELQELLIRQAIVFEDENASVEILVSITDVTHHSKDMVRAQFSFYSAVGKESTQMTLNASGRLVITYGPVRKDALPVQRPSLVDMVDVPSERFYNALDPLGYSYTGRFRALKSMQRKLGIATGLVTRQEAADLSSVTLDPAMLDAAIQAVLLAKSFPGDGELWCSQVPKVIHRIAVNPTLCDPSGNGVESTFPLDAVLTMMKASDTQGDVDVYSADGQYTMIRMEGIHAVPLEATNADRDRPFFSGVVWGPAAPDSQTVNFDATATPEEYELAYVLERVATFYLRKIHLAFPMDHSARHEGPYVGLLNYATYVTQQVASGYHRYTQPHWARDTVAVIKSESQRFPNNIDLAVMHIIGEHMVDVISTRATILEHLTKDNLLSRYYEQAMGIGHFSDYLASVVEQIVHRYPQMKVLEIGAGTGMATKKVIQRVGHSFGSYTFTDISSGFFENAREIFASHQDQMVYKVLDAEKDPVAQGFGEQSYDLIVASFVLHATSHLETTLHNLRRLLKPGGYVVMLEVTNLEQSRLGYIFGSLPGWWLGANDGRILSPCVPTEEWDRLLKLTGFSGVDTFTSDADALPYPASAIVSQAVDETVDFLRNPLGTPSDFVNRATPVVLIGGASSSVRVIRDVVKRHLDTRFDQVQVVDRLSDFVAISPAVSNGLLTLNLSDLEEPVFQNMTADSLAALKLLYERSNYVLWVTEDARAGNPHQNQSLGFGRSMMVEMPHVQSQFLDLDRITETSSVASRIVDAALRFVGVNMPDRGGDVASAGLLWSTEPEIAVIGGRELLPRIKLNRSQNLRYNASRRAIAEDVDMDQKSVQLVRNGNAYVLEQGSTSGFGNQTPGYTRIRVDVSSLKSLHLGRGNALYLVAGTVLATGEKVIGFADKNSSIVDIPPSWMSHRPDISMAALILSIIARLFSRAILSSISPGGVLVVAEPDELLAPVLEWQASQQKIRVVFVTTQEDAPERPNWVVLHSQVHVRSLPKLAPTEPVTILDLSTGEEPSALALKLRNSLHPASAFERLTYWFSDHARRGEIHIPAEAMLTMYRPPMSPPASDSVIASHSFPVTDVSQIPAARCPLAVVDWQSTSHVPALIRPVDHYPMLKSNKTYWLVGLTGSLGLSLCAWMIHQGAQNVVLTSRNPKIDQIILQELRSLGARVEVYAGDVTNQESLRGVYDRICQTLPPVAGVGQGAMVLIDTMIKDMEIDAMQSVLQPKVKGSINLDELFSAERPLDFFIFFSSATCVTGNIGQSNYAAANMFMTGLAANRNRRGLAGSVMNIGAIMGVGYVTRETSEALQRNLLKSGHVWMSEQDFHTIFAEAILAGTPGSDANVEITCGLRITNASEEQRPLWSFNPRFQHLVVMEEQVEETYEQDKKGMSLKLQLREARTTDEIYEVIKECFIVKLQIMLGLDDAATNSITSKAADDLGIDSLNTVEIRSWFLKEMKVDIPVLRILGGATIGEIIKFVLEKLPSDMTPSLGLSPPTGAASKATSQPNPKPKVVVERRNVPRLEKKIVHSAGSRTSSSVTGTSKSVSPARSMDTASSQTSEAASPSIHTEEITKPLKPLAPLLKADVVSSNLGKVITPVEQTAALSVRKEPLSFGQSRFWFLKLYLEDQTTFNITCLLRMTGPLSVDSLSRAVTAVGQRHEALRTCFTVEDGQSPVQTILPESTLKLERQEYRTMADVNTATKKLTQHVYEMESGRLMRVILLSSAPNSSVHYVLVGYHHINMDGVSLEVFLHDLEKAYRGQPLSSDLLQYPDYAAKQRQERNQGAWQDDLTFWKNEMVGSNLEIPLLPLASVAIRKPLTQYRHHRVEQRLDARLGAQIRQLCQSIKATPSHFYLATFTTLLARLTRTREIWVGMADANRIQAETADSIGNYLNLLALRMQYDPDQPFVASVQAARKKSYGALAHSRIPFDVLLSELQVPRSSTHSPLFQVFMDYRHDVREKRMFGDCQLEGVEYEMGRTAYDIALDVVDTADDGPLIIMGLQESLYSPDTAQMLLNSFLEMVRAFAQDSKQPGGHVSLFSASDLEKALALGNGSVVASQWPATLSHRIDDMAKQYPQKLALNDGDNLRLTFQQMSQRADSIASALLSANVSRQQRVAVFQHPSSDCICSILAILRIGATYVPLDLRLELARLRSIVQDCEPTVFLVDSHTQSQAPDLMLTRPAMTINIADLPRIAPFPVMNRAAAEDEAVILYTSGSTGNPKGVPLTHENLRVNIEGNQAEFQFGPDDCLLQQIAFSFDFSVWQIFMALANGASLFIAPSTHRGDPVALMDLVVREDITITGATPSEYRSWFQHGDLARLKTSQWKTAVSAGEAMTTNMIRDFQALNKSDLRLVNGYGPTEASMSSNKLVVPYLTNKDHPEEWMEKGAVVAGYTAPNYSIYIVDEAMNLLPIGLPGQILIGGPGIASGYLNNKELSCIRFINDKYASPEQRACGWRWAHLTGDRGRIGADGRLRIEGRIEGDTQVKLRGYRIDLQDVEAAMLKASPGAFKDLVVSLHQATQALVAHVVFSQHYPAHKHSQALEIKSLELPRYMWPARTVSIDQMPVTVHGKLDRKALQTMDLPAIEPMKQTSTAHLNEAQAQMVQLWEEVISKDILAAHHIVAESDFFAVGGTSMLLVDLQRQIKSWFKMEIALAELFSANTLEKMALLIKPQEDIATPAAVDAAPPSSPSPLALTASLPPAPTTINWSEEVQLPRVLREQTSSGTTVSVPEKTSGLRLVLTGATGFIGQALLQQLTANPAISTVHCIAVRDPSAIPAHEKILVHAGDLTHAALGLAPVEAQAIFREVDAVIHNGADVSFMKSYHSLRRTNVESTIALIQNSLSRQIPFHYISSSGIANLAGTTTFAEVSAASFIPPTDGSQGYLATKWVSERLLEEAHREFGLPVYIHRPSSVTGSNAPPLDLMDNLMTYARRLKAVPMPERSSWKGYLDFVPVEQVVRDVTGDVLSAAGTVPSARASKVHYIHHLGRQVSLTGLHRYLERETGAVYRVLKMGEWLEEATQVGMDALLRTYLESMDKEDVKVVFPRLVAGKRHASTVGVAKGVKIGESWLEKGKTLLFSW.

The 435-residue stretch at 8–442 (REPIAIVGSG…GTNAHAIIEA (435 aa)) folds into the Ketosynthase family 3 (KS3) domain. Catalysis depends on for beta-ketoacyl synthase activity residues C181, H320, and H362. Residues 554 to 878 (VFTGQGAQWA…QRGMNDVEAM (325 aa)) are malonyl-CoA:ACP transacylase (MAT) domain. The tract at residues 944–1078 (HPILGTRCPD…GRLVITYGPV (135 aa)) is N-terminal hotdog fold. A PKS/mFAS DH domain is found at 944-1246 (HPILGTRCPD…AVPLEATNAD (303 aa)). Residues 945–1243 (PILGTRCPDG…GIHAVPLEAT (299 aa)) are dehydratase (DH) domain. H976 (proton acceptor; for dehydratase activity) is an active-site residue. Positions 1093–1246 (MVDVPSERFY…AVPLEATNAD (154 aa)) are C-terminal hotdog fold. D1152 functions as the Proton donor; for dehydratase activity in the catalytic mechanism. Residues 1400–1585 (HFSDYLASVV…GVDTFTSDAD (186 aa)) form a methyltransferase (MT) domain region. The segment at 2118–2292 (TYWLVGLTGS…AGSVMNIGAI (175 aa)) is ketoreductase (KR)domain. Residues 2399–2478 (TTDEIYEVIK…TIGEIIKFVL (80 aa)) are peptidyl carrier protein. In terms of domain architecture, Carrier 1 spans 2405–2481 (EVIKECFIVK…EIIKFVLEKL (77 aa)). Residue S2441 is modified to O-(pantetheine 4'-phosphoryl)serine. A disordered region spans residues 2488-2569 (SLGLSPPTGA…AASPSIHTEE (82 aa)). Over residues 2511 to 2525 (VVVERRNVPRLEKKI) the composition is skewed to basic and acidic residues. Positions 2528–2545 (SAGSRTSSSVTGTSKSVS) are enriched in low complexity. Over residues 2551 to 2565 (DTASSQTSEAASPSI) the composition is skewed to polar residues. Residues 2607 to 3036 (KEPLSFGQSR…DSKQPGGHVS (430 aa)) form a condensation region. Residues 3069–3478 (DMAKQYPQKL…DGRLRIEGRI (410 aa)) are adenylation. A Carrier 2 domain is found at 3593–3673 (AHLNEAQAQM…KMALLIKPQE (81 aa)). The tract at residues 3598–3670 (AQAQMVQLWE…TLEKMALLIK (73 aa)) is thiolation. An O-(pantetheine 4'-phosphoryl)serine modification is found at S3633. The segment at 3740-3959 (LTGATGFIGQ…DFVPVEQVVR (220 aa)) is reductase (RED) domain.

In the C-terminal section; belongs to the NRP synthetase family.

It functions in the pathway secondary metabolite biosynthesis. Its function is as follows. Hybrid PKS-NRPS synthetase; part of the gene cluster that mediates the biosynthesis of oxaleimides, cytotoxic compounds containing an unusual disubstituted succinimide moiety. The first step of the pathway is provided by the HR-PKS poxF that serves in a new mode of collaborative biosynthesis with the PKS-NRPS poxE, by providing the olefin containing amino acid substrate via the synthesis of an ACP-bound dec-4-enoate. The cytochrome P450 monooxygenase poxM-catalyzed oxidation at the alpha-position creates the enzyme-bound 2-hydroxydec-4-enoyl-ACP thioester, which may be prone to spontaneous hydrolysis to yield 2-hydroxydec-4-enoic acid due to increased electrophilicity of the carbonyl. 2-hydroxydec-4-enoic acid can then be further oxidized by poxM to yield the alpha-ketoacid 2-oxodec-4-enoicacid, which is reductively aminated by the aminotransferase poxL to yield (S,E)-2-aminodec-4-enoic acid. The Hybrid PKS-NRPS synthetase poxE then performs condensation between the octaketide product of its PKS modules and the amino group of (S,E)-2-aminodec-4-enoic acid which is activated and incorporated by the adenylation domain. The resulting aminoacyl product can be cyclized by the Diels-Alderase PoxQ and reductively released by the reductive (R) domain of poxE to yield an aldehyde intermediate. The released aldehyde is then substrate for a Knoevenagel condensation by the hydrolyase poxO followed by an oxidation at the 5-position of the pyrrolidone ring. The presence of the olefin from the amino acid building block allows for migration of the substituted allyl group to occur. This allylic transposition reaction takes place in a conjugate addition, semipinacol-like fashion to yield a succinimide intermediate. Iterative two-electron oxidations of the C7 methyl of the succinimide intermediate to the carboxylic acid can be catalyzed by one of two remaining cytochrome P450 monooxygenasess poxC or poxD to yield oxaleimide A. Subsequent oxidation yields the maleimide scaffold oxaleimide I. Both oxaleimide A and oxaleimide I can undergo oxidative modifications in the decalin ring to yield the series of products oxaleimides B to H. The protein is Hybrid PKS-NRPS synthetase poxE of Penicillium oxalicum.